Here is a 635-residue protein sequence, read N- to C-terminus: Elongation factor 4 (635 aa).

The tr-type G domain maps to 11 to 193; that stretch reads EKIRNFSIIA…QIVEKVPAPT (183 aa). GTP-binding positions include 23–28 and 140–143; these read DHGKST and NKID.

The protein belongs to the TRAFAC class translation factor GTPase superfamily. Classic translation factor GTPase family. LepA subfamily.

Its subcellular location is the cell membrane. The catalysed reaction is GTP + H2O = GDP + phosphate + H(+). Its function is as follows. Required for accurate and efficient protein synthesis under certain stress conditions. May act as a fidelity factor of the translation reaction, by catalyzing a one-codon backward translocation of tRNAs on improperly translocated ribosomes. Back-translocation proceeds from a post-translocation (POST) complex to a pre-translocation (PRE) complex, thus giving elongation factor G a second chance to translocate the tRNAs correctly. Binds to ribosomes in a GTP-dependent manner. This is Elongation factor 4 from Streptococcus pyogenes serotype M12 (strain MGAS2096).